We begin with the raw amino-acid sequence, 105 residues long: Small ribosomal subunit protein uS10 (105 aa).

It belongs to the universal ribosomal protein uS10 family. As to quaternary structure, part of the 30S ribosomal subunit.

Involved in the binding of tRNA to the ribosomes. This Roseobacter denitrificans (strain ATCC 33942 / OCh 114) (Erythrobacter sp. (strain OCh 114)) protein is Small ribosomal subunit protein uS10.